Here is a 353-residue protein sequence, read N- to C-terminus: O-antigen biosynthesis glycosyltransferase WclY (353 aa).

A helical transmembrane segment spans residues 116-136 (SLIGGLLWCSIWLFFDKLVIL). UDP contacts are provided by Asn-190 and Glu-271. The short motif at 263–271 (EGFGLTVLE) is the E(x7)E element.

It belongs to the glycosyltransferase group 1 family. Glycosyltransferase 4 subfamily.

The protein localises to the membrane. It functions in the pathway bacterial outer membrane biogenesis; LPS O-antigen biosynthesis. Activated by 5mM MnCl(2) and MgCl(2). No significant effect on activity by 5 mM ethylenediaminetetraacetic acid (EDTA), 0.125-0.5% Triton X-100 or dithiothreitol (DTT). Inhibited by 5 mM Zn-acetate. Involved in the assembly of the O-repeating unit during O-antigen biosynthesis. Glucosyltransferase accountable for the alpha-D-Glc-1,4-beta-D-Gal linkage within the O-antigen. Transfers alpha-1,4-Glc to the Gal moiety of a specific Gal-beta1-3GalNAc-alpha-OPO3-PO3-phenoxyundecyl (Gal-beta1-3GalNAc-PP-PhU) synthetic natural acceptor substrate analog. Requires both Gal-beta1-3GalNAc-alpha and the diphosphate moiety in the acceptor. Not active with GalNAc-PP-PhU, GlcNAc-PP-PhU, Gal-beta1-3GalNAc-alpha-O-benzyl, D-Rha-alpha1-3GlcNAc-alpha-PP-PhU or D-Man-alpha1-3Man-alpha-5-benzamidopentyl (BAP), nor with glycopeptides TTTVTP (Gal-beta1-3GalNAc-alpha-)TPTG or TT (Gal-beta1-3GalNAc-alpha-)TVTPTPTG as acceptor substrates. Has a broad nucleotide sugar donor substrate specificity with ADP-Glc, TDP-Glc and UDP-Glc as superior donors. Gal, GlcNAc, and GalNAc residues are transferred from UDP-sugars, but with low activity. UDP-Xyl, UDP-GlcA, GDP-Fuc or GDP-K-Rha do not act as donors. The sequence is that of O-antigen biosynthesis glycosyltransferase WclY from Escherichia coli.